A 260-amino-acid chain; its full sequence is Hydroxyethylthiazole kinase 1 (260 aa).

A substrate-binding site is contributed by Met-39. ATP is bound by residues Arg-115 and Thr-160. Gly-187 contacts substrate.

The protein belongs to the Thz kinase family. It depends on Mg(2+) as a cofactor.

The enzyme catalyses 5-(2-hydroxyethyl)-4-methylthiazole + ATP = 4-methyl-5-(2-phosphooxyethyl)-thiazole + ADP + H(+). It functions in the pathway cofactor biosynthesis; thiamine diphosphate biosynthesis; 4-methyl-5-(2-phosphoethyl)-thiazole from 5-(2-hydroxyethyl)-4-methylthiazole: step 1/1. Functionally, catalyzes the phosphorylation of the hydroxyl group of 4-methyl-5-beta-hydroxyethylthiazole (THZ). The protein is Hydroxyethylthiazole kinase 1 of Streptococcus pneumoniae (strain Hungary19A-6).